The sequence spans 292 residues: Small ribosomal subunit biogenesis GTPase RsgA (292 aa).

A CP-type G domain is found at 64–221 (RSELFRPAVA…LVDTPGFSSL (158 aa)). GTP contacts are provided by residues 113–116 (NKMD) and 164–172 (GPSGVGKST). Residues Cys-245, Cys-250, His-252, and Cys-258 each contribute to the Zn(2+) site.

The protein belongs to the TRAFAC class YlqF/YawG GTPase family. RsgA subfamily. In terms of assembly, monomer. Associates with 30S ribosomal subunit, binds 16S rRNA. The cofactor is Zn(2+).

The protein resides in the cytoplasm. One of several proteins that assist in the late maturation steps of the functional core of the 30S ribosomal subunit. Helps release RbfA from mature subunits. May play a role in the assembly of ribosomal proteins into the subunit. Circularly permuted GTPase that catalyzes slow GTP hydrolysis, GTPase activity is stimulated by the 30S ribosomal subunit. This Clostridium botulinum (strain 657 / Type Ba4) protein is Small ribosomal subunit biogenesis GTPase RsgA.